A 448-amino-acid chain; its full sequence is Methylenetetrahydrofolate--tRNA-(uracil-5-)-methyltransferase TrmFO (448 aa).

FAD is bound at residue 13-18; the sequence is GAGLAG.

The protein belongs to the MnmG family. TrmFO subfamily. It depends on FAD as a cofactor.

It localises to the cytoplasm. It catalyses the reaction uridine(54) in tRNA + (6R)-5,10-methylene-5,6,7,8-tetrahydrofolate + NADH + H(+) = 5-methyluridine(54) in tRNA + (6S)-5,6,7,8-tetrahydrofolate + NAD(+). It carries out the reaction uridine(54) in tRNA + (6R)-5,10-methylene-5,6,7,8-tetrahydrofolate + NADPH + H(+) = 5-methyluridine(54) in tRNA + (6S)-5,6,7,8-tetrahydrofolate + NADP(+). Catalyzes the folate-dependent formation of 5-methyl-uridine at position 54 (M-5-U54) in all tRNAs. The polypeptide is Methylenetetrahydrofolate--tRNA-(uracil-5-)-methyltransferase TrmFO (Streptococcus pyogenes serotype M3 (strain ATCC BAA-595 / MGAS315)).